The sequence spans 146 residues: 3-hydroxyacyl-[acyl-carrier-protein] dehydratase FabZ (146 aa).

Histidine 49 is an active-site residue.

This sequence belongs to the thioester dehydratase family. FabZ subfamily.

The protein resides in the cytoplasm. It carries out the reaction a (3R)-hydroxyacyl-[ACP] = a (2E)-enoyl-[ACP] + H2O. In terms of biological role, involved in unsaturated fatty acids biosynthesis. Catalyzes the dehydration of short chain beta-hydroxyacyl-ACPs and long chain saturated and unsaturated beta-hydroxyacyl-ACPs. The chain is 3-hydroxyacyl-[acyl-carrier-protein] dehydratase FabZ from Psychrobacter arcticus (strain DSM 17307 / VKM B-2377 / 273-4).